The following is a 633-amino-acid chain: Glutamyl-tRNA(Gln) amidotransferase subunit E (633 aa).

A disordered region spans residues 415 to 437 (LDDGTTKFLRPQPGSARMYPETD).

The protein belongs to the GatB/GatE family. GatE subfamily. In terms of assembly, heterodimer of GatD and GatE.

It carries out the reaction L-glutamyl-tRNA(Gln) + L-glutamine + ATP + H2O = L-glutaminyl-tRNA(Gln) + L-glutamate + ADP + phosphate + H(+). Its function is as follows. Allows the formation of correctly charged Gln-tRNA(Gln) through the transamidation of misacylated Glu-tRNA(Gln) in organisms which lack glutaminyl-tRNA synthetase. The reaction takes place in the presence of glutamine and ATP through an activated gamma-phospho-Glu-tRNA(Gln). The GatDE system is specific for glutamate and does not act on aspartate. The chain is Glutamyl-tRNA(Gln) amidotransferase subunit E from Saccharolobus solfataricus (strain ATCC 35092 / DSM 1617 / JCM 11322 / P2) (Sulfolobus solfataricus).